The chain runs to 707 residues: Polyribonucleotide nucleotidyltransferase (707 aa).

Residues Asp486 and Asp492 each coordinate Mg(2+). The KH domain occupies 553 to 612 (PRIHIIKINPEKIKDVIGKGGSVIRMLTEETGTIIEIEDDGTVKISSTVKEKAKNAIRRI). Residues 622-690 (GRIYSGKVTR…RQGRLRLSIK (69 aa)) enclose the S1 motif domain.

Belongs to the polyribonucleotide nucleotidyltransferase family. Component of the RNA degradosome, which is a multiprotein complex involved in RNA processing and mRNA degradation. Mg(2+) is required as a cofactor.

The protein localises to the cytoplasm. It carries out the reaction RNA(n+1) + phosphate = RNA(n) + a ribonucleoside 5'-diphosphate. In terms of biological role, involved in mRNA degradation. Catalyzes the phosphorolysis of single-stranded polyribonucleotides processively in the 3'- to 5'-direction. The polypeptide is Polyribonucleotide nucleotidyltransferase (Buchnera aphidicola subsp. Acyrthosiphon pisum (strain 5A)).